Consider the following 202-residue polypeptide: Probable pathogenesis-related protein CaO19.2336 (202 aa).

Positions 1 to 20 are cleaved as a signal peptide; the sequence is MKTLLFIYLQLLLLLSIIIG. Residues N58 and N152 are each glycosylated (N-linked (GlcNAc...) asparagine). Positions 66-179 constitute an SCP domain; that stretch reads LKEHNNKRKL…LNALYIVCSY (114 aa).

It belongs to the CRISP family.

It is found in the secreted. Secreted protein that acts as a virulence factor during infections. The polypeptide is Probable pathogenesis-related protein CaO19.2336 (Candida albicans (strain SC5314 / ATCC MYA-2876) (Yeast)).